We begin with the raw amino-acid sequence, 357 residues long: Endo-1,4-beta-xylanase Xyn11B (357 aa).

Positions 1–27 (MKIFQNTKNVIVSIAWAAALCTSAVSA) are cleaved as a signal peptide. The GH11 domain maps to 29–226 (TLTSNSTGTN…SRGSSDITVS (198 aa)). The active-site Nucleophile is E116. Residue E213 is the Proton donor of the active site. The interval 220–245 (SSDITVSQGGSSGGGNSSSSSSASGG) is disordered.

This sequence belongs to the glycosyl hydrolase 11 (cellulase G) family.

Its subcellular location is the secreted. The catalysed reaction is Endohydrolysis of (1-&gt;4)-beta-D-xylosidic linkages in xylans.. It participates in glycan degradation; xylan degradation. Endo-acting xylanase which specifically cleaves internal linkages on the xylan backbone, releasing xylooligosaccharides. Is able to hydrolyze glucuronoxylan and the arabinoxylan from wheat. The chain is Endo-1,4-beta-xylanase Xyn11B (xyn11B) from Cellvibrio japonicus (Pseudomonas fluorescens subsp. cellulosa).